The primary structure comprises 394 residues: uncharacterized protein (394 aa).

12 consecutive transmembrane segments (helical) span residues alanine 13–leucine 35, valine 50–serine 72, leucine 79–serine 97, glycine 107–leucine 129, isoleucine 136–isoleucine 158, phenylalanine 168–leucine 190, isoleucine 218–leucine 240, valine 250–phenylalanine 272, valine 277–leucine 299, isoleucine 309–asparagine 331, alanine 344–serine 366, and phenylalanine 371–isoleucine 393.

It belongs to the major facilitator superfamily.

Its subcellular location is the cell membrane. This is an uncharacterized protein from Buchnera aphidicola subsp. Baizongia pistaciae (strain Bp).